The following is a 177-amino-acid chain: Large ribosomal subunit protein uL6 (177 aa).

This sequence belongs to the universal ribosomal protein uL6 family. In terms of assembly, part of the 50S ribosomal subunit.

Its function is as follows. This protein binds to the 23S rRNA, and is important in its secondary structure. It is located near the subunit interface in the base of the L7/L12 stalk, and near the tRNA binding site of the peptidyltransferase center. This Hydrogenovibrio crunogenus (strain DSM 25203 / XCL-2) (Thiomicrospira crunogena) protein is Large ribosomal subunit protein uL6.